An 801-amino-acid polypeptide reads, in one-letter code: LPS-assembly protein LptD (801 aa).

The N-terminal stretch at 1-23 (MARLFSLKPLVLALGFCFGTHCA) is a signal peptide.

Belongs to the LptD family. As to quaternary structure, component of the lipopolysaccharide transport and assembly complex. Interacts with LptE and LptA.

It is found in the cell outer membrane. Together with LptE, is involved in the assembly of lipopolysaccharide (LPS) at the surface of the outer membrane. In Neisseria gonorrhoeae (strain ATCC 700825 / FA 1090), this protein is LPS-assembly protein LptD.